A 265-amino-acid polypeptide reads, in one-letter code: MSAAPLVGYSSSGSEDESEDGMRTRPGDGSHRRGQSPLPRQRFPVPDSVLNMFPGTEEGPEDDSTKHGGRVRTFPHERGNWATHVYVPYEAKEEFLDLLDVLLPHAQTYVPRLVRMKVFHLSLSQSVVLRHHWILPFVQALKARMTSFHRFFFTANQVKIYTNQEKTRTFIGLEVTSGHAQFLDLVSEVDRVMEEFNLTTFYQDPSFHLSLAWCVGDARLQLEGQCLQELQAIVDGFEDAEVLLRVHTEQVRCKSGNKFFSMPLK.

The disordered stretch occupies residues 1–72 (MSAAPLVGYS…DSTKHGGRVR (72 aa)). Over residues 20 to 31 (DGMRTRPGDGSH) the composition is skewed to basic and acidic residues. His-120 acts as the Proton acceptor in catalysis. 120-122 (HLS) contacts AMP. UMP contacts are provided by residues Gln-164, Tyr-202, and 206-210 (SFHLS). Residues Tyr-202 and 204–210 (DPSFHLS) each bind AMP. Residue His-208 is the Proton donor of the active site.

It belongs to the 2H phosphoesterase superfamily. USB1 family. In terms of assembly, interacts with PLRG1, CDC5L and PRPF19.

Its subcellular location is the nucleus. It catalyses the reaction a 3'-end uridylyl-uridine-RNA = a 3'-end 2',3'-cyclophospho-uridine-RNA + uridine. It carries out the reaction a 3'-end uridylyl-adenosine-RNA = a 3'-end 2',3'-cyclophospho-uridine-RNA + adenosine. With respect to regulation, 3'-5' RNA exonuclease activity is inhibited by a 3' phosphate terminated RNA. 3'-5' RNA exonuclease that trims the 3' end of oligo(U) and oligo(A) tracts of the pre-U6 small nuclear RNA (snRNA) molecule, leading to the formation of a mature U6 snRNA 3' end-terminated with a 2',3'-cyclic phosphate. Participates in the U6 snRNA 3' end processing that prevents U6 snRNA degradation. In addition also removes uridines from the 3' end of U6atac snRNA and possibly the vault RNA VTRNA1-1. This Homo sapiens (Human) protein is U6 snRNA phosphodiesterase 1.